Here is a 419-residue protein sequence, read N- to C-terminus: Enolase (419 aa).

(2R)-2-phosphoglycerate is bound at residue Q161. E205 functions as the Proton donor in the catalytic mechanism. The Mg(2+) site is built by D240, E283, and D309. Residues K334, R363, S364, and K385 each contribute to the (2R)-2-phosphoglycerate site. K334 functions as the Proton acceptor in the catalytic mechanism.

It belongs to the enolase family. Requires Mg(2+) as cofactor.

Its subcellular location is the cytoplasm. It localises to the secreted. The protein localises to the cell surface. It carries out the reaction (2R)-2-phosphoglycerate = phosphoenolpyruvate + H2O. Its pathway is carbohydrate degradation; glycolysis; pyruvate from D-glyceraldehyde 3-phosphate: step 4/5. Functionally, catalyzes the reversible conversion of 2-phosphoglycerate (2-PG) into phosphoenolpyruvate (PEP). It is essential for the degradation of carbohydrates via glycolysis. In Saccharolobus islandicus (strain L.S.2.15 / Lassen #1) (Sulfolobus islandicus), this protein is Enolase.